The following is a 67-amino-acid chain: MKKGTKVIVQRDETKHPSKGTWPMFRGRKGVVTCEVRGAGPVEYGVSFSGGDSADAYFKRYELTERK.

This Mycobacterium (Mycobacteriophage L5) protein is Gene 51 protein (51).